A 375-amino-acid polypeptide reads, in one-letter code: MKFELDKTQGRARRGRLQFERGTVETPAFMPVGTYGTVKGMTPEEVKETGAQILLGNTFHLWLRPGQEVMKLHGDLHDFMQWHGPILTDSGGFQVFSLGATRKITEEGVHFRNPVNGDKVFMDAEKSMEIQYDLGSDIVMIFDECTPYPATHDEAKKSMEMSLRWAQRSRNHFDKQENPNALFGIIQGGVYEDLRDVSVDGLTNIGFDGYAVGGLAVGEPKEDMHRILEHTCPQLPEDKPRYLMGVGKPEDLVEGVRRGIDMFDCVMPTRNARNGHLFVTGGVIKIRNAKHKTDTTPLDPHCDCYTCLNYSKAYLYHLDKCNEILGSRLNTIHNLRYYQRLMASIRSAIEEDRFDVFVEEFYARRDREVPPLKNA.

D89 acts as the Proton acceptor in catalysis. Residues 89-93 (DSGGF), D143, Q187, and G214 contribute to the substrate site. The segment at 245–251 (GVGKPED) is RNA binding. D264 acts as the Nucleophile in catalysis. The tract at residues 269–273 (TRNAR) is RNA binding; important for wobble base 34 recognition. Zn(2+)-binding residues include C302, C304, C307, and H333.

This sequence belongs to the queuine tRNA-ribosyltransferase family. Homodimer. Within each dimer, one monomer is responsible for RNA recognition and catalysis, while the other monomer binds to the replacement base PreQ1. Zn(2+) is required as a cofactor.

It catalyses the reaction 7-aminomethyl-7-carbaguanine + guanosine(34) in tRNA = 7-aminomethyl-7-carbaguanosine(34) in tRNA + guanine. The protein operates within tRNA modification; tRNA-queuosine biosynthesis. In terms of biological role, catalyzes the base-exchange of a guanine (G) residue with the queuine precursor 7-aminomethyl-7-deazaguanine (PreQ1) at position 34 (anticodon wobble position) in tRNAs with GU(N) anticodons (tRNA-Asp, -Asn, -His and -Tyr). Catalysis occurs through a double-displacement mechanism. The nucleophile active site attacks the C1' of nucleotide 34 to detach the guanine base from the RNA, forming a covalent enzyme-RNA intermediate. The proton acceptor active site deprotonates the incoming PreQ1, allowing a nucleophilic attack on the C1' of the ribose to form the product. After dissociation, two additional enzymatic reactions on the tRNA convert PreQ1 to queuine (Q), resulting in the hypermodified nucleoside queuosine (7-(((4,5-cis-dihydroxy-2-cyclopenten-1-yl)amino)methyl)-7-deazaguanosine). This chain is Queuine tRNA-ribosyltransferase, found in Photobacterium profundum (strain SS9).